A 725-amino-acid polypeptide reads, in one-letter code: Dynein axonemal assembly factor 1 (725 aa).

The tract at residues 1–91 (MHPEPSEPAT…EDRGPRMTKS (91 aa)) is disordered. Residues 38-48 (GCKEEINDPKE) are compositionally biased toward basic and acidic residues. A compositionally biased stretch (polar residues) spans 53–67 (SSDTSYHSQQKQSGD). A compositionally biased stretch (basic and acidic residues) spans 76 to 86 (HPREDREDRGP). 6 LRR repeats span residues 107-129 (ALND…EEYT), 130-151 (GLRC…EAQT), 152-173 (ELRC…EPLQ), 174-195 (KLDA…SCLP), 196-217 (VLNT…QHLQ), and 221-242 (RLCV…SILE). One can recognise an LRRCT domain in the interval 256–294 (PVIRQIPNYRRTVTVRLKHLTYLDDRPVFPKDRACAEAW). The segment covering 330–345 (RAEERKRQRESQERGE) has biased composition (basic and acidic residues). Residues 330–513 (RAEERKRQRE…LGAAREEPTP (184 aa)) form a disordered region. Ser358 bears the Phosphoserine mark. 2 stretches are compositionally biased toward basic and acidic residues: residues 360 to 408 (EGKE…REDG) and 481 to 491 (VKGEDGDREPE). Thr559 is subject to Phosphothreonine. Phosphoserine is present on residues Ser562 and Ser583. Residues 632–642 (DLEIRKQDTKS) show a composition bias toward basic and acidic residues. Residues 632–703 (DLEIRKQDTK…AATPPETCVG (72 aa)) form a disordered region.

The protein belongs to the DNAAF1 family. In terms of tissue distribution, mainly expressed in trachea and testis.

The protein localises to the cell projection. Its subcellular location is the cilium. The protein resides in the cytoplasm. It is found in the cytoskeleton. It localises to the spindle pole. Cilium-specific protein required for the stability of the ciliary architecture. Plays a role in cytoplasmic preassembly of dynein arms. Involved in regulation of microtubule-based cilia and actin-based brush border microvilli. In Homo sapiens (Human), this protein is Dynein axonemal assembly factor 1 (DNAAF1).